The following is a 33-amino-acid chain: Dermaseptin-4 (33 aa).

A Leucine amide modification is found at leucine 33.

Expressed by the skin glands.

The protein localises to the secreted. Its function is as follows. Has antiparasitic activity against trypomastigote form of T.cruzi (IC(50)=0.25 uM) in vitro but not against L.infantum. Probably acts by permeabilizing cell membranes. In vitro, shows no cytotoxicity against macrophages. Has antibacterial activity. This Pithecopus nordestinus (Northeastern Brazilian leaf frog) protein is Dermaseptin-4.